The sequence spans 505 residues: Deoxyguanosinetriphosphate triphosphohydrolase (505 aa).

An HD domain is found at 66-273 (RLTHSMEVQQ…MEAADDISYC (208 aa)).

The protein belongs to the dGTPase family. Type 1 subfamily. In terms of assembly, homotetramer. Mg(2+) serves as cofactor.

It catalyses the reaction dGTP + H2O = 2'-deoxyguanosine + triphosphate + H(+). Functionally, dGTPase preferentially hydrolyzes dGTP over the other canonical NTPs. The chain is Deoxyguanosinetriphosphate triphosphohydrolase from Escherichia coli (strain K12 / MC4100 / BW2952).